Consider the following 189-residue polypeptide: UPF0232 protein MLBr00004 (189 aa).

The segment at 59–78 is disordered; the sequence is TDRRRNWSGPGPDVRDPQPL.

It belongs to the UPF0232 family.

This chain is UPF0232 protein MLBr00004, found in Mycobacterium leprae (strain Br4923).